The sequence spans 483 residues: MKVLPASGLAVFLIMALKFSTAAPSLVAASPRTWRNNYRLAQAYLDKYYTNKEGHQIGEMVARGSNSMIRKIKELQAFFGLQVTGKLDQTTMNVIKKPRCGVPDVANYRLFPGEPKWKKNTLTYRISKYTPSMSSVEVDKAVEMALQAWSSAVPLSFVRINSGEADIMISFENGDHGDSYPFDGPRGTLAHAFAPGEGLGGDTHFDNAEKWTMGTNGFNLFTVAAHEFGHALGLAHSTDPSALMYPTYKYKNPYGFHLPKDDVKGIQALYGPRKVFLGKPTLPHAPHHKPSIPDLCDSSSSFDAVTMLGKELLLFKDRIFWRRQVHLRTGIRPSTITSSFPQLMSNVDAAYEVAERGTAYFFKGPHYWITRGFQMQGPPRTIYDFGFPRHVQQIDAAVYLREPQKTLFFVGDEYYSYDERKRKMEKDYPKNTEEEFSGVNGQIDAAVELNGYIYFFSGPKTYKYDTEKEDVVSVVKSSSWIGC.

An N-terminal signal peptide occupies residues 1–22 (MKVLPASGLAVFLIMALKFSTA). A propeptide spanning residues 23 to 107 (APSLVAASPR…PRCGVPDVAN (85 aa)) is cleaved from the precursor. The Cysteine switch motif lies at 98 to 105 (PRCGVPDV). Cysteine 100 contacts Zn(2+). Residues glutamate 164, alanine 165, and aspartate 166 each coordinate Ca(2+). Residues histidine 176 and aspartate 178 each coordinate Zn(2+). Ca(2+) contacts are provided by aspartate 183, glycine 184, arginine 186, and threonine 188. Histidine 191 is a Zn(2+) binding site. Positions 197, 198, 200, and 202 each coordinate Ca(2+). Residue histidine 204 participates in Zn(2+) binding. Aspartate 206 and glutamate 209 together coordinate Ca(2+). Position 226 (histidine 226) interacts with Zn(2+). Glutamate 227 is a catalytic residue. Histidine 230 and histidine 236 together coordinate Zn(2+). Hemopexin repeat units follow at residues 293 to 343 (PDLC…FPQL), 344 to 389 (MSNV…GFPR), 391 to 439 (VQQI…FSGV), and 440 to 483 (NGQI…WIGC). Cysteine 296 and cysteine 483 are oxidised to a cystine.

Belongs to the peptidase M10A family. The cofactor is Zn(2+). It depends on Ca(2+) as a cofactor. Autoactivates at least at the 107-Asn-|-Tyr-108 site. Expressed specifically in the enamel organ.

It localises to the secreted. The protein resides in the extracellular space. Its subcellular location is the extracellular matrix. In terms of biological role, degrades amelogenin, the major protein component of the enamel matrix and two of the macromolecules characterizing the cartilage extracellular matrix: aggrecan and the cartilage oligomeric matrix protein (COMP). May play a central role in tooth enamel formation. Cleaves aggrecan at the '360-Asn-|-Phe-361' site. This chain is Matrix metalloproteinase-20 (MMP20), found in Homo sapiens (Human).